The primary structure comprises 195 residues: Imidazoleglycerol-phosphate dehydratase (195 aa).

Belongs to the imidazoleglycerol-phosphate dehydratase family.

The protein localises to the cytoplasm. It carries out the reaction D-erythro-1-(imidazol-4-yl)glycerol 3-phosphate = 3-(imidazol-4-yl)-2-oxopropyl phosphate + H2O. The protein operates within amino-acid biosynthesis; L-histidine biosynthesis; L-histidine from 5-phospho-alpha-D-ribose 1-diphosphate: step 6/9. In Trichlorobacter lovleyi (strain ATCC BAA-1151 / DSM 17278 / SZ) (Geobacter lovleyi), this protein is Imidazoleglycerol-phosphate dehydratase.